We begin with the raw amino-acid sequence, 419 residues long: eIF5-mimic protein 1 (419 aa).

Positions 1-22 are disordered; that stretch reads MNKHQKPVLTGQRFKTRKRDEK. N6-acetyllysine is present on Lys-117. Positions 248–415 constitute a W2 domain; it reads VQQSLGTRKE…QNAEEESESE (168 aa). A phosphoserine mark is found at Ser-412, Ser-414, and Ser-419.

Belongs to the BZW family. Interacts with EIF3E, EIF2S2 and EIF3C.

The protein localises to the cytoplasm. In terms of biological role, translation initiation regulator which represses non-AUG initiated translation and repeat-associated non-AUG (RAN) initiated translation by acting as a competitive inhibitor of eukaryotic translation initiation factor 5 (EIF5) function. Increases the accuracy of translation initiation by impeding EIF5-dependent translation from non-AUG codons by competing with it for interaction with EIF2S2 within the 43S pre-initiation complex (PIC) in an EIF3C-binding dependent manner. The polypeptide is eIF5-mimic protein 1 (Bzw2) (Mus musculus (Mouse)).